A 517-amino-acid polypeptide reads, in one-letter code: Arp2/3 complex-activating protein rickA (517 aa).

2 disordered regions span residues 313-441 and 461-517; these read LENN…SKPA and KVSD…SFVR. 2 stretches are compositionally biased toward pro residues: residues 319-340 and 347-378; these read PPSPLPENNIPSPPPPPPPSPL and SSPPPPPPPPLPENNIPSPPPPPPPPPPPPMA. The 18-residue stretch at 406–423 folds into the WH2 domain; that stretch reads DTSDLMREIAGPKKLKKV. The interval 444 to 477 is central and acidic domains; the sequence is VNALSGLESIFARRAVIKVSDSSSSESDSGNWSD. The segment covering 463 to 479 has biased composition (low complexity); it reads SDSSSSESDSGNWSDVS. Residues 500-517 are compositionally biased toward polar residues; the sequence is THAQKINNRNSQNPSFVR.

In terms of assembly, homodimer.

It is found in the cell surface. Functionally, recruits and activates the Arp2/3 complex, which in turn leads to actin polymerization, promoting Rickettsia motility during infection. The protein is Arp2/3 complex-activating protein rickA (rickA) of Rickettsia conorii (strain ATCC VR-613 / Malish 7).